Reading from the N-terminus, the 80-residue chain is Exodeoxyribonuclease 7 small subunit (80 aa).

The protein belongs to the XseB family. Heterooligomer composed of large and small subunits.

The protein resides in the cytoplasm. The catalysed reaction is Exonucleolytic cleavage in either 5'- to 3'- or 3'- to 5'-direction to yield nucleoside 5'-phosphates.. Functionally, bidirectionally degrades single-stranded DNA into large acid-insoluble oligonucleotides, which are then degraded further into small acid-soluble oligonucleotides. The polypeptide is Exodeoxyribonuclease 7 small subunit (Oleidesulfovibrio alaskensis (strain ATCC BAA-1058 / DSM 17464 / G20) (Desulfovibrio alaskensis)).